The following is a 135-amino-acid chain: Ribosome-binding factor A (135 aa).

A disordered region spans residues 115-135; that stretch reads VNEDKRKQQDSGREEDQAGEE. The segment covering 116–135 has biased composition (basic and acidic residues); that stretch reads NEDKRKQQDSGREEDQAGEE.

Belongs to the RbfA family. In terms of assembly, monomer. Binds 30S ribosomal subunits, but not 50S ribosomal subunits or 70S ribosomes.

Its subcellular location is the cytoplasm. Its function is as follows. One of several proteins that assist in the late maturation steps of the functional core of the 30S ribosomal subunit. Associates with free 30S ribosomal subunits (but not with 30S subunits that are part of 70S ribosomes or polysomes). Required for efficient processing of 16S rRNA. May interact with the 5'-terminal helix region of 16S rRNA. The sequence is that of Ribosome-binding factor A from Vibrio campbellii (strain ATCC BAA-1116).